The sequence spans 83 residues: Large ribosomal subunit protein eL43 (83 aa).

Zn(2+) is bound by residues C38, C41, C56, and C59. The C4-type zinc-finger motif lies at 38–59 (CPVCGRRAVRRISTGIWQCKKC).

This sequence belongs to the eukaryotic ribosomal protein eL43 family. Putative zinc-binding subfamily. Part of the 50S ribosomal subunit. The cofactor is Zn(2+).

Functionally, binds to the 23S rRNA. This Pyrococcus abyssi (strain GE5 / Orsay) protein is Large ribosomal subunit protein eL43.